Consider the following 197-residue polypeptide: Peptidyl-tRNA hydrolase (197 aa).

Residue Y23 participates in tRNA binding. Residue H28 is the Proton acceptor of the active site. TRNA is bound by residues F73, N75, and N121.

It belongs to the PTH family. As to quaternary structure, monomer.

It is found in the cytoplasm. It carries out the reaction an N-acyl-L-alpha-aminoacyl-tRNA + H2O = an N-acyl-L-amino acid + a tRNA + H(+). Functionally, hydrolyzes ribosome-free peptidyl-tRNAs (with 1 or more amino acids incorporated), which drop off the ribosome during protein synthesis, or as a result of ribosome stalling. In terms of biological role, catalyzes the release of premature peptidyl moieties from peptidyl-tRNA molecules trapped in stalled 50S ribosomal subunits, and thus maintains levels of free tRNAs and 50S ribosomes. This is Peptidyl-tRNA hydrolase from Frankia alni (strain DSM 45986 / CECT 9034 / ACN14a).